The following is a 244-amino-acid chain: Agamous-like MADS-box protein AGL13 (244 aa).

The 55-residue stretch at 3–57 (RGKVEVKRIENKITRQVTFSKRKSGLLKKAYELSVLCDAEVSLIIFSTGGKLYEF) folds into the MADS-box domain. The region spanning 85-175 (TQGLRQEVTK…KLETEDHDFK (91 aa)) is the K-box domain.

It localises to the nucleus. Its function is as follows. Probable transcription factor. The sequence is that of Agamous-like MADS-box protein AGL13 (AGL13) from Arabidopsis thaliana (Mouse-ear cress).